The primary structure comprises 56 residues: Large ribosomal subunit protein eL37 (56 aa).

Zn(2+) is bound by residues C19, C22, C34, and C37. The C4-type zinc-finger motif lies at 19–37 (CRRCGRLSYNFNRKTCVAC).

Belongs to the eukaryotic ribosomal protein eL37 family. Zn(2+) is required as a cofactor.

Functionally, binds to the 23S rRNA. This chain is Large ribosomal subunit protein eL37, found in Methanothrix thermoacetophila (strain DSM 6194 / JCM 14653 / NBRC 101360 / PT) (Methanosaeta thermophila).